The primary structure comprises 678 residues: UvrABC system protein B (678 aa).

Residues 31-417 (ENLNDGLAHQ…KSGTEIIDQV (387 aa)) form the Helicase ATP-binding domain. ATP is bound at residue 44–51 (GVTGSGKT). The Beta-hairpin motif lies at 97–120 (YYDYYQPEAYVPSSDTFIEKDASI). Residues 436–602 (QVDDLLSEAR…GLNKKVGELL (167 aa)) enclose the Helicase C-terminal domain. Positions 603-625 (DIGQGGSNKSRNKPRSQKAAEPA) are disordered. One can recognise a UVR domain in the interval 638–673 (QQQIKKLEQQMYKFAQDLEFEKAAAIRDQLHKLREQ).

This sequence belongs to the UvrB family. In terms of assembly, forms a heterotetramer with UvrA during the search for lesions. Interacts with UvrC in an incision complex.

The protein resides in the cytoplasm. Functionally, the UvrABC repair system catalyzes the recognition and processing of DNA lesions. A damage recognition complex composed of 2 UvrA and 2 UvrB subunits scans DNA for abnormalities. Upon binding of the UvrA(2)B(2) complex to a putative damaged site, the DNA wraps around one UvrB monomer. DNA wrap is dependent on ATP binding by UvrB and probably causes local melting of the DNA helix, facilitating insertion of UvrB beta-hairpin between the DNA strands. Then UvrB probes one DNA strand for the presence of a lesion. If a lesion is found the UvrA subunits dissociate and the UvrB-DNA preincision complex is formed. This complex is subsequently bound by UvrC and the second UvrB is released. If no lesion is found, the DNA wraps around the other UvrB subunit that will check the other stand for damage. This Mannheimia succiniciproducens (strain KCTC 0769BP / MBEL55E) protein is UvrABC system protein B.